The following is a 494-amino-acid chain: Guanosine-5'-triphosphate,3'-diphosphate pyrophosphatase (494 aa).

This sequence belongs to the GppA/Ppx family. GppA subfamily.

The enzyme catalyses guanosine 3'-diphosphate 5'-triphosphate + H2O = guanosine 3',5'-bis(diphosphate) + phosphate + H(+). It functions in the pathway purine metabolism; ppGpp biosynthesis; ppGpp from GTP: step 2/2. Catalyzes the conversion of pppGpp to ppGpp. Guanosine pentaphosphate (pppGpp) is a cytoplasmic signaling molecule which together with ppGpp controls the 'stringent response', an adaptive process that allows bacteria to respond to amino acid starvation, resulting in the coordinated regulation of numerous cellular activities. The polypeptide is Guanosine-5'-triphosphate,3'-diphosphate pyrophosphatase (Escherichia coli O127:H6 (strain E2348/69 / EPEC)).